The sequence spans 440 residues: Rhamnogalacturonase A (440 aa).

The first 18 residues, 1 to 18 (MRALFLLALGSIPALVSG), serve as a signal peptide directing secretion. Residues Cys-39 and Cys-65 are joined by a disulfide bond. Residue Asn-50 is glycosylated (N-linked (GlcNAc...) asparagine). Asp-215 serves as the catalytic Proton donor. A disulfide bridge connects residues Cys-217 and Cys-234. Residue His-290 is part of the active site. The N-linked (GlcNAc...) asparagine glycan is linked to Asn-317. Cystine bridges form between Cys-340–Cys-346 and Cys-368–Cys-377. Thr-385 carries O-linked (Man) threonine glycosylation. Ser-386 carries an O-linked (Man) serine glycan. O-linked (Man) threonine glycosylation is found at Thr-388, Thr-389, and Thr-390. The O-linked (Man) serine glycan is linked to Ser-391. O-linked (Man) threonine glycosylation is found at Thr-392 and Thr-394. Residues Ser-398 and Ser-401 are each glycosylated (O-linked (Man) serine). O-linked (Man) threonine glycosylation is found at Thr-403, Thr-404, and Thr-416. Ser-418 is a glycosylation site (O-linked (Man) serine). Residues Thr-423 and Thr-426 are each glycosylated (O-linked (Man) threonine). 2 O-linked (Man) serine glycosylation sites follow: Ser-427 and Ser-436.

This sequence belongs to the glycosyl hydrolase 28 family. The N-terminus is blocked. In terms of processing, N-glycosylated and may also be O-glycosylated.

The protein resides in the secreted. It carries out the reaction Endohydrolysis of alpha-D-GalA-(1-&gt;2)-alpha-L-Rha glycosidic bond in the rhamnogalacturonan I backbone with initial inversion of anomeric configuration releasing oligosaccharides with beta-D-GalA at the reducing end.. Its function is as follows. Pectinolytic enzymes consist of four classes of enzymes: pectine lyase, polygalacturonase, pectin methylesterase and rhamnogalacturonase. Has a positive effect in the apple hot-mash liquefaction process. Hydrolyzes alpha-D-galacturonopyranosyl-(1,2)-alpha-L-rhamnopyranosyl linkages in the backbone of the hairy regions of pectins. This is Rhamnogalacturonase A (rhgA) from Aspergillus aculeatus.